We begin with the raw amino-acid sequence, 344 residues long: DNA-directed RNA polymerase subunit alpha (344 aa).

The alpha N-terminal domain (alpha-NTD) stretch occupies residues 1-238; sequence MKVIKTAPLI…KQLGVFGERP (238 aa). Residues 254 to 344 form an alpha C-terminal domain (alpha-CTD) region; the sequence is AKDLSAKIES…EKLEDKGGND (91 aa).

Belongs to the RNA polymerase alpha chain family. As to quaternary structure, homodimer. The RNAP catalytic core consists of 2 alpha, 1 beta, 1 beta' and 1 omega subunit. When a sigma factor is associated with the core the holoenzyme is formed, which can initiate transcription.

The catalysed reaction is RNA(n) + a ribonucleoside 5'-triphosphate = RNA(n+1) + diphosphate. Functionally, DNA-dependent RNA polymerase catalyzes the transcription of DNA into RNA using the four ribonucleoside triphosphates as substrates. This is DNA-directed RNA polymerase subunit alpha from Helicobacter pylori (strain J99 / ATCC 700824) (Campylobacter pylori J99).